Here is a 701-residue protein sequence, read N- to C-terminus: Polyribonucleotide nucleotidyltransferase (701 aa).

Asp487 and Asp493 together coordinate Mg(2+). In terms of domain architecture, KH spans 554 to 613 (PTMIAMKIDTDKIRDVIGKGGATIRAICEETKASIDIEDDGSIKIFGETKEAAEAAKQRI). Positions 623 to 691 (GKIYVGKVER…NRGRIKLSIK (69 aa)) constitute an S1 motif domain.

This sequence belongs to the polyribonucleotide nucleotidyltransferase family. Component of the RNA degradosome, which is a multiprotein complex involved in RNA processing and mRNA degradation. Mg(2+) serves as cofactor.

The protein resides in the cytoplasm. The catalysed reaction is RNA(n+1) + phosphate = RNA(n) + a ribonucleoside 5'-diphosphate. Involved in mRNA degradation. Catalyzes the phosphorolysis of single-stranded polyribonucleotides processively in the 3'- to 5'-direction. This chain is Polyribonucleotide nucleotidyltransferase, found in Pseudomonas putida (strain GB-1).